Reading from the N-terminus, the 468-residue chain is Ubiquitin carboxyl-terminal hydrolase 17-like protein B (468 aa).

A disordered region spans residues 1 to 20 (MVVALSFPEADPAMSPPSAP). Residues 51-348 (CGLQNTGNSC…NAYVLFYVQQ (298 aa)) enclose the USP domain. The active-site Nucleophile is the Cys-60. The active-site Proton acceptor is His-307. The interval 374-449 (KKSGEKKHNK…GGQNLRNTEG (76 aa)) is disordered. Over residues 394-403 (CENREKRSSK) the composition is skewed to basic and acidic residues. Residues 422–434 (GQKQENTKLTPQE) show a composition bias toward polar residues.

This sequence belongs to the peptidase C19 family. USP17 subfamily. Post-translationally, ubiquitinated. Detected in brain, heart, liver, lung, kidney, ovary and spleen.

It catalyses the reaction Thiol-dependent hydrolysis of ester, thioester, amide, peptide and isopeptide bonds formed by the C-terminal Gly of ubiquitin (a 76-residue protein attached to proteins as an intracellular targeting signal).. Its activity is regulated as follows. Inhibited by ubiquitin aldehyde. Deubiquitinating enzyme that removes conjugated ubiquitin from specific proteins to regulate different cellular processes. The chain is Ubiquitin carboxyl-terminal hydrolase 17-like protein B from Mus musculus (Mouse).